The following is a 278-amino-acid chain: Ribosomal protein L11 methyltransferase (278 aa).

The S-adenosyl-L-methionine site is built by Thr-131, Gly-152, Asp-173, and Asn-214.

Belongs to the methyltransferase superfamily. PrmA family.

It is found in the cytoplasm. The catalysed reaction is L-lysyl-[protein] + 3 S-adenosyl-L-methionine = N(6),N(6),N(6)-trimethyl-L-lysyl-[protein] + 3 S-adenosyl-L-homocysteine + 3 H(+). Its function is as follows. Methylates ribosomal protein L11. This chain is Ribosomal protein L11 methyltransferase, found in Campylobacter lari (strain RM2100 / D67 / ATCC BAA-1060).